The chain runs to 129 residues: Small ribosomal subunit protein uS11c (129 aa).

The protein belongs to the universal ribosomal protein uS11 family. Part of the 30S ribosomal subunit.

It localises to the plastid. The protein localises to the chloroplast. This Oltmannsiellopsis viridis (Marine flagellate) protein is Small ribosomal subunit protein uS11c.